The sequence spans 1872 residues: Histone acetyltransferase KAT6B (1872 aa).

Residues 1–77 (MVKLANPLYT…LASYKDPDNP (77 aa)) form the SAMD1-like winged helix (WH) domain. Disordered regions lie at residues 70 to 103 (SYKD…CNDL) and 168 to 207 (KEGP…HEKD). In terms of domain architecture, H15 spans 104 to 177 (RNVDWNKLLK…KEGPQYRVNS (74 aa)). The span at 189–202 (PSAFPSSLPPVSLL) shows a compositional bias: low complexity. 2 consecutive PHD-type zinc fingers follow at residues 214–273 (IPIC…CKTC) and 270–321 (CKTC…CRPK). Position 356 is a phosphoserine (serine 356). The tract at residues 361-417 (EGSMSAFTGRGSPGRGQKTKVSTTPSSGHAASGKHSSSRLAVTDPTRPGATTKTTTS) is disordered. The negatively regulates HAT activity stretch occupies residues 362 to 535 (GSMSAFTGRG…ECESGVEDCG (174 aa)). Low complexity predominate over residues 386-395 (SSGHAASGKH). Lysine 491 participates in a covalent cross-link: Glycyl lysine isopeptide (Lys-Gly) (interchain with G-Cter in SUMO2). Positions 533 to 807 (DCGRYPSVIE…LDPESLRWTP (275 aa)) constitute an MYST-type HAT domain. A catalytic region spans residues 536-826 (RYPSVIEFGK…EEEREAEKEA (291 aa)). The segment at 566 to 591 (LYLCEFCLKYMKSKNILLRHSKKCGW) adopts a C2HC MYST-type zinc-finger fold. The segment at 570–826 (EFCLKYMKSK…EEEREAEKEA (257 aa)) is interaction with BRPF1. Lysine 633 is subject to N6-acetyllysine; by autocatalysis. Acetyl-CoA is bound by residues 674 to 678 (SCIMI) and 683 to 689 (QRQGFGR). Glutamate 709 (proton donor/acceptor) is an active-site residue. Residue serine 713 participates in acetyl-CoA binding. Positions 846-860 (SRVSSRQSSAKVQSK) are enriched in low complexity. Disordered stretches follow at residues 846 to 1018 (SRVS…NHFF), 1031 to 1252 (DAEH…FKDA), 1283 to 1358 (MSCN…DDTF), and 1388 to 1418 (DECQ…SPSV). Lysine 856, lysine 860, and lysine 862 each carry N6-acetyllysine. Serine 866 is subject to Phosphoserine. Residues 887 to 909 (SEEEEEEEEEDDEEEEEEEEEES) are compositionally biased toward acidic residues. Residues 910–924 (IQTSPPRLTKPQSVS) are compositionally biased toward polar residues. Residues 925-944 (IKRKRPFVVKKKRGRKRRRI) are compositionally biased toward basic residues. Residues 946-959 (SSVTTETISETTEV) are compositionally biased toward low complexity. A compositionally biased stretch (basic residues) spans 991–1004 (PVLRKAFPHQPGKK). Basic and acidic residues-rich tracts occupy residues 1031 to 1047 (DAEH…EPLK) and 1094 to 1114 (EEQK…REVT). The span at 1155-1176 (EEGEEEGEEEGEREEQEEEEEV) shows a compositional bias: acidic residues. The span at 1177 to 1207 (TTEKDLDGAKSKENPEPEISMEKEDPVHLGD) shows a compositional bias: basic and acidic residues. Positions 1208 to 1217 (HEEDEDEEEE) are enriched in acidic residues. Basic and acidic residues-rich tracts occupy residues 1238 to 1252 (NMER…FKDA) and 1310 to 1320 (QTQKQDQKNSD). The segment covering 1339-1349 (ETAQAVQSLTQ) has biased composition (polar residues). The tract at residues 1359–1872 (PDCAETQEAC…QSLNGSYMRR (514 aa)) is interaction with RUNX1 and RUNX2. The span at 1393-1410 (SDHSSPVSSVHSHPGQSV) shows a compositional bias: low complexity.

The protein belongs to the MYST (SAS/MOZ) family. As to quaternary structure, component of the MOZ/MORF complex composed at least of ING5, KAT6A, KAT6B, MEAF6 and one of BRPF1, BRD1/BRPF2 and BRPF3. Interacts with RUNX1 and RUNX2. Post-translationally, autoacetylation at Lys-633 is required for proper function. As to expression, ubiquitously expressed.

It localises to the nucleus. It catalyses the reaction L-lysyl-[protein] + acetyl-CoA = N(6)-acetyl-L-lysyl-[protein] + CoA + H(+). Its function is as follows. Histone acetyltransferase which may be involved in both positive and negative regulation of transcription. Required for RUNX2-dependent transcriptional activation. Component of the MOZ/MORF complex which has a histone H3 acetyltransferase activity. Involved in cerebral cortex development. In Mus musculus (Mouse), this protein is Histone acetyltransferase KAT6B (Kat6b).